Here is a 481-residue protein sequence, read N- to C-terminus: Pentatricopeptide repeat-containing protein 8, mitochondrial (481 aa).

Residues 1–55 (MQGFGSQIFRKLLRSSNAKVSDALLQNTRTLFTAPPLHSGLQTSFTAETQQHVRQ) constitute a mitochondrion transit peptide. PPR repeat units lie at residues 137 to 172 (SARF…EFLP) and 365 to 399 (SIST…GLKP).

Its subcellular location is the mitochondrion. Its function is as follows. Mitochondrial RNA-binding protein involved in mitochondrial translation. The cox1 mRNA is one target but it is not clear if ppr8 has a single or multiple targets. The protein is Pentatricopeptide repeat-containing protein 8, mitochondrial (ppr8) of Schizosaccharomyces pombe (strain 972 / ATCC 24843) (Fission yeast).